The chain runs to 121 residues: uncharacterized protein (121 aa).

Helical transmembrane passes span 26–46 (YACSIFLLSSYCGNCLTAVAT), 57–77 (SIPLLTLVLLPSTTPSSSVLI), and 90–110 (SFCFTLALLSLLIPPLKLLCV).

The protein localises to the membrane. This is an uncharacterized protein from Saccharomyces cerevisiae (strain ATCC 204508 / S288c) (Baker's yeast).